We begin with the raw amino-acid sequence, 91 residues long: Cytochrome b-c1 complex subunit 10, mitochondrial (91 aa).

Over 1 to 34 the chain is Mitochondrial matrix; that stretch reads MFATSILRSAYPAYKSPYGPKYQYQPHIDGITPK. Residues 35 to 58 form a helical membrane-spanning segment; it reads QLVRILPTAAAWTGVALFAVVYYA. Topologically, residues 59–91 are mitochondrial intermembrane; sequence SGIPRLRRDVLQRIPYLGERYFVNEIPASDNPF.

This sequence belongs to the UQCR11/QCR10 family. As to quaternary structure, component of the ubiquinol-cytochrome c oxidoreductase (cytochrome b-c1 complex, complex III, CIII), a multisubunit enzyme composed of 10 subunits. The complex is composed of 3 respiratory subunits cytochrome b (cob), cytochrome c1 (cyt-1) and Rieske protein (fes-1), 2 core protein subunits pep and ucr-1, and 5 low-molecular weight protein subunits qcr6, qcr7, qcr8, qcr9 and probably NCU16844/qcr10. The complex exists as an obligatory dimer and forms supercomplexes (SCs) in the inner mitochondrial membrane with NADH-ubiquinone oxidoreductase (complex I, CI) and cytochrome c oxidase (complex IV, CIV), resulting in different assemblies (supercomplexes SCI(1)III(2), SCIII(2)IV(1) and SCIII(2)IV(2) as well as higher order I(x)III(y)IV(z) megacomplexes).

It localises to the mitochondrion inner membrane. Functionally, component of the ubiquinol-cytochrome c oxidoreductase, a multisubunit transmembrane complex that is part of the mitochondrial electron transport chain which drives oxidative phosphorylation. The respiratory chain contains 3 multisubunit complexes succinate dehydrogenase (complex II, CII), ubiquinol-cytochrome c oxidoreductase (cytochrome b-c1 complex, complex III, CIII) and cytochrome c oxidase (complex IV, CIV), that cooperate to transfer electrons derived from NADH and succinate to molecular oxygen, creating an electrochemical gradient over the inner membrane that drives transmembrane transport and the ATP synthase. The cytochrome b-c1 complex catalyzes electron transfer from ubiquinol to cytochrome c, linking this redox reaction to translocation of protons across the mitochondrial inner membrane, with protons being carried across the membrane as hydrogens on the quinol. In the process called Q cycle, 2 protons are consumed from the matrix, 4 protons are released into the intermembrane space and 2 electrons are passed to cytochrome c. This Neurospora crassa (strain ATCC 24698 / 74-OR23-1A / CBS 708.71 / DSM 1257 / FGSC 987) protein is Cytochrome b-c1 complex subunit 10, mitochondrial.